Reading from the N-terminus, the 142-residue chain is Large ribosomal subunit protein uL13 (142 aa).

It belongs to the universal ribosomal protein uL13 family. Part of the 50S ribosomal subunit.

Functionally, this protein is one of the early assembly proteins of the 50S ribosomal subunit, although it is not seen to bind rRNA by itself. It is important during the early stages of 50S assembly. The polypeptide is Large ribosomal subunit protein uL13 (Geobacter sp. (strain M21)).